A 90-amino-acid polypeptide reads, in one-letter code: Probable Fe(2+)-trafficking protein (90 aa).

Belongs to the Fe(2+)-trafficking protein family.

Its function is as follows. Could be a mediator in iron transactions between iron acquisition and iron-requiring processes, such as synthesis and/or repair of Fe-S clusters in biosynthetic enzymes. This Actinobacillus succinogenes (strain ATCC 55618 / DSM 22257 / CCUG 43843 / 130Z) protein is Probable Fe(2+)-trafficking protein.